We begin with the raw amino-acid sequence, 342 residues long: S-adenosylmethionine:tRNA ribosyltransferase-isomerase (342 aa).

The protein belongs to the QueA family. Monomer.

The protein resides in the cytoplasm. The enzyme catalyses 7-aminomethyl-7-carbaguanosine(34) in tRNA + S-adenosyl-L-methionine = epoxyqueuosine(34) in tRNA + adenine + L-methionine + 2 H(+). Its pathway is tRNA modification; tRNA-queuosine biosynthesis. Transfers and isomerizes the ribose moiety from AdoMet to the 7-aminomethyl group of 7-deazaguanine (preQ1-tRNA) to give epoxyqueuosine (oQ-tRNA). The protein is S-adenosylmethionine:tRNA ribosyltransferase-isomerase of Campylobacter jejuni subsp. jejuni serotype O:6 (strain 81116 / NCTC 11828).